We begin with the raw amino-acid sequence, 72 residues long: Conotoxin TxMMSK-04 (72 aa).

The N-terminal stretch at 1–20 is a signal peptide; it reads MMSKLGVLLTICLLLFPLTA. A propeptide spanning residues 21–51 is cleaved from the precursor; it reads VPLDGDQPADRPAERMQDGISSEHHPFFDSV. The residue at position 55 (glutamine 55) is a Pyrrolidone carboxylic acid. 3 disulfides stabilise this stretch: cysteine 57-cysteine 71, cysteine 58-cysteine 67, and cysteine 63-cysteine 70. Proline 69 is subject to 4-hydroxyproline. Cysteine 71 is modified (cysteine amide).

Belongs to the conotoxin M superfamily. In terms of tissue distribution, expressed by the venom duct.

The protein resides in the secreted. The protein is Conotoxin TxMMSK-04 of Conus textile (Cloth-of-gold cone).